A 228-amino-acid polypeptide reads, in one-letter code: tRNA (guanine-N(1)-)-methyltransferase (228 aa).

Residues G111 and 130 to 135 (IGDFVL) each bind S-adenosyl-L-methionine.

This sequence belongs to the RNA methyltransferase TrmD family. As to quaternary structure, homodimer.

Its subcellular location is the cytoplasm. It carries out the reaction guanosine(37) in tRNA + S-adenosyl-L-methionine = N(1)-methylguanosine(37) in tRNA + S-adenosyl-L-homocysteine + H(+). Its function is as follows. Specifically methylates guanosine-37 in various tRNAs. This chain is tRNA (guanine-N(1)-)-methyltransferase, found in Ureaplasma urealyticum serovar 10 (strain ATCC 33699 / Western).